Consider the following 663-residue polypeptide: Cytoplasmic dynein 1 intermediate chain (663 aa).

Residues 17–37 (LREEKDRRRREKEIKDMEEAA) are compositionally biased toward basic and acidic residues. 2 disordered regions span residues 17 to 52 (LREEKDRRRREKEIKDMEEAAGRIGGGAGIDKDQRK) and 75 to 107 (SVNSMTSDNSNTQTPDASLQATVNGQSGGKKQP). Residues 75–85 (SVNSMTSDNSN) show a composition bias toward low complexity. Polar residues predominate over residues 86–99 (TQTPDASLQATVNG). WD repeat units lie at residues 311–360 (SKNR…STPE), 364–404 (HCQS…RTPI), 413–454 (AHTH…QPQD), 463–503 (SKAI…SGVN), 508–553 (RHLG…PLYS), 556–596 (DNSD…EVPT), and 602–641 (AGAPALNRVSWTPSGLHVCIGDEAGKLYVYDVAENLAQPS).

This sequence belongs to the dynein intermediate chain family. Homodimer. The cytoplasmic dynein 1 complex consists of two catalytic heavy chains (HCs) and a number of non-catalytic subunits presented by intermediate chains (ICs), light intermediate chains (LICs) and light chains (LCs). High levels of isoform 1b, isoform 1c, isoform 3a and isoform 4 accumulate in early egg chambers and at stage 9 become concentrated at the posterior of the oocyte. Isoform 5a and isoform 5b are highly expressed in adult head and to a lesser extent in adult torso. Isoform 1a, isoform 2a and isoform 2b are found in all tissues examined, including ovaries, midgut, torso and head.

It is found in the cytoplasm. The protein resides in the cytoskeleton. Its subcellular location is the lysosome membrane. It localises to the nucleus membrane. Acts as one of several non-catalytic accessory components of the cytoplasmic dynein 1 complex that are thought to be involved in linking dynein to cargos and to adapter proteins that regulate dynein function. Cytoplasmic dynein 1 acts as a motor for the intracellular retrograde motility of vesicles and organelles along microtubules. The intermediate chains mediate the help dynein bind to dynactin 150 kDa component. The sequence is that of Cytoplasmic dynein 1 intermediate chain (sw) from Drosophila melanogaster (Fruit fly).